Reading from the N-terminus, the 705-residue chain is Putative membrane protein SCO0839 (705 aa).

A run of 12 helical transmembrane segments spans residues 16 to 36, 177 to 197, 202 to 222, 237 to 257, 281 to 301, 316 to 336, 373 to 393, 529 to 549, 554 to 574, 587 to 607, 627 to 647, and 648 to 668; these read WLVPVLLLLVWLVVGGALGPY, GIDGLLLAVALITVLVILLLV, LLPLVIILSAVFALALSCAIV, VQGILSILVIGAATDYALLLT, SWGAVVASAATVALGLLALLL, IGIVCSVLSTLTFLPAVLVLL, IWALSLAALLACAAFAPTLSS, LIVPVVLAIILVILILLLRSL, LLVATVALNFLATLGVSALVF, VPLYGFVFLVALGVDYNIFLM, LTATGGVITSAGVVLAATFAA, and LGVIPLAFLLQIAFIVAFGVL.

Belongs to the resistance-nodulation-cell division (RND) (TC 2.A.6) family. MmpL subfamily.

The protein localises to the cell membrane. This Streptomyces coelicolor (strain ATCC BAA-471 / A3(2) / M145) protein is Putative membrane protein SCO0839.